A 519-amino-acid chain; its full sequence is 2,3-bisphosphoglycerate-independent phosphoglycerate mutase (519 aa).

Positions 18 and 68 each coordinate Mn(2+). Ser-68 acts as the Phosphoserine intermediate in catalysis. Residues His-129, Arg-159 to Asp-160, Arg-191, Arg-197, Arg-267 to Arg-270, and Lys-341 contribute to the substrate site. Positions 408, 412, 449, 450, and 468 each coordinate Mn(2+).

The protein belongs to the BPG-independent phosphoglycerate mutase family. Monomer. The cofactor is Mn(2+).

It catalyses the reaction (2R)-2-phosphoglycerate = (2R)-3-phosphoglycerate. Its pathway is carbohydrate degradation; glycolysis; pyruvate from D-glyceraldehyde 3-phosphate: step 3/5. In terms of biological role, catalyzes the interconversion of 2-phosphoglycerate and 3-phosphoglycerate. This is 2,3-bisphosphoglycerate-independent phosphoglycerate mutase from Coxiella burnetii (strain RSA 331 / Henzerling II).